We begin with the raw amino-acid sequence, 224 residues long: UPF0173 metal-dependent hydrolase Memar_1421 (224 aa).

It belongs to the UPF0173 family.

This chain is UPF0173 metal-dependent hydrolase Memar_1421, found in Methanoculleus marisnigri (strain ATCC 35101 / DSM 1498 / JR1).